Consider the following 98-residue polypeptide: MKRLLFVLIALLAMLQYRLWLGDKSLADSFHLQEQIKLQQQSNAQLVARNQVLREEISDLRSGTEALEERARNELGMVKEGETFFRVVGGERGGVPEN.

Topologically, residues 1 to 3 (MKR) are cytoplasmic. The chain crosses the membrane as a helical span at residues 4–21 (LLFVLIALLAMLQYRLWL). The Periplasmic segment spans residues 22–98 (GDKSLADSFH…GGERGGVPEN (77 aa)). Residues 31 to 74 (HLQEQIKLQQQSNAQLVARNQVLREEISDLRSGTEALEERARNE) are a coiled coil.

It belongs to the FtsB family. As to quaternary structure, part of a complex composed of FtsB, FtsL and FtsQ.

It is found in the cell inner membrane. Functionally, essential cell division protein. May link together the upstream cell division proteins, which are predominantly cytoplasmic, with the downstream cell division proteins, which are predominantly periplasmic. The sequence is that of Cell division protein FtsB from Shewanella pealeana (strain ATCC 700345 / ANG-SQ1).